The chain runs to 391 residues: Phosphoprotein (391 aa).

3 positions are modified to phosphothreonine: Thr10, Thr16, and Thr39. Residues 55–65 (KNIQYPTTSHQ) are compositionally biased toward polar residues. Positions 55–90 (KNIQYPTTSHQGSKSKGRGSGARPIIVSSSEGGTGG) are disordered. Ser69 bears the Phosphoserine mark. 3 positions are modified to phosphothreonine: Thr91, Thr150, and Thr165. A disordered region spans residues 145–208 (TSTPVTEFKR…PQQDSTPANV (64 aa)). The residue at position 188 (Ser188) is a Phosphoserine. The segment at 216-279 (ISANEIMDLL…MATVKIMDPG (64 aa)) is multimerization. Positions 218-245 (ANEIMDLLRGMDARLQHLEQKVDKVLAQ) form a coiled coil. Thr250 carries the post-translational modification Phosphothreonine. Ser257 carries the phosphoserine modification. 2 positions are modified to phosphothreonine: Thr258 and Thr282. Residues Ser292 and Ser294 each carry the phosphoserine modification. Residue Thr298 is modified to Phosphothreonine. 2 positions are modified to phosphoserine: Ser301 and Ser374. Residues 343 to 391 (AGRKVMITKMITDCVANPQMKQVFEQRLAKASTEDALNDIKRDIIRSAI) form an interaction with the nucleoprotein region. A Phosphothreonine modification is found at Thr375.

It belongs to the rubulavirus/avulavirus P protein family. As to quaternary structure, homotetramer. Interacts (via multimerization domain) with polymerase L; this interaction forms the polymerase L-P complex. Interacts (via N-terminus) with N0 (via Ncore); this interaction allows P to chaperon N0 to avoid N polymerization before encapsidation. Interacts (via C-terminus) with N-RNA template; this interaction positions the polymerase on the template for both transcription and replication. Interacts with host RPS6KB1 kinase; this interaction may play a role in the viral replication and transcription.

Functionally, essential cofactor of the RNA polymerase L that plays a central role in the transcription and replication by forming the polymerase complex with RNA polymerase L and recruiting L to the genomic N-RNA template for RNA synthesis. Also plays a central role in the encapsidation of nascent RNA chains by forming the encapsidation complex with the nucleocapsid protein N (N-P complex). Acts as a chaperone for newly synthesized free N protein, so-called N0, allowing encapsidation of nascent RNA chains during replication. The nucleoprotein protein N prevents excessive phosphorylation of P, which leads to down-regulation of viral transcription/ replication. Participates, together with N, in the formation of viral factories (viroplasms), which are large inclusions in the host cytoplasm where replication takes place. This is Phosphoprotein from Mumps virus genotype B (strain Miyahara vaccine) (MuV).